Here is a 321-residue protein sequence, read N- to C-terminus: Anthranilate phosphoribosyltransferase (321 aa).

5-phospho-alpha-D-ribose 1-diphosphate contacts are provided by residues Gly-72, Gly-75 to Asp-76, Thr-80, Asn-82 to Thr-85, Lys-99 to Ser-107, and Ser-111. Residue Gly-72 participates in anthranilate binding. Residue Ser-84 participates in Mg(2+) binding. Position 102 (Asn-102) interacts with anthranilate. Arg-157 lines the anthranilate pocket. Mg(2+) is bound by residues Asp-216 and Glu-217.

Belongs to the anthranilate phosphoribosyltransferase family. Homodimer. Requires Mg(2+) as cofactor.

It carries out the reaction N-(5-phospho-beta-D-ribosyl)anthranilate + diphosphate = 5-phospho-alpha-D-ribose 1-diphosphate + anthranilate. Its pathway is amino-acid biosynthesis; L-tryptophan biosynthesis; L-tryptophan from chorismate: step 2/5. In terms of biological role, catalyzes the transfer of the phosphoribosyl group of 5-phosphorylribose-1-pyrophosphate (PRPP) to anthranilate to yield N-(5'-phosphoribosyl)-anthranilate (PRA). This Methanococcus maripaludis (strain C7 / ATCC BAA-1331) protein is Anthranilate phosphoribosyltransferase.